A 351-amino-acid chain; its full sequence is GTPase Obg (351 aa).

Positions 1-159 (MKFLDQAKVY…RWIWLRLKLI (159 aa)) constitute an Obg domain. Residues 160–328 (ADVGLVGLPN…LCGSAWDIVL (169 aa)) form the OBG-type G domain. GTP is bound by residues 166–173 (GLPNAGKS), 191–195 (FTTLY), 213–216 (DIPG), 280–283 (NKID), and 309–311 (SGV). Mg(2+) contacts are provided by Ser173 and Thr193.

This sequence belongs to the TRAFAC class OBG-HflX-like GTPase superfamily. OBG GTPase family. Monomer. Requires Mg(2+) as cofactor.

Its subcellular location is the cytoplasm. Its function is as follows. An essential GTPase which binds GTP, GDP and possibly (p)ppGpp with moderate affinity, with high nucleotide exchange rates and a fairly low GTP hydrolysis rate. Plays a role in control of the cell cycle, stress response, ribosome biogenesis and in those bacteria that undergo differentiation, in morphogenesis control. The sequence is that of GTPase Obg from Maricaulis maris (strain MCS10) (Caulobacter maris).